Reading from the N-terminus, the 522-residue chain is Sensory neuron membrane protein 1 (522 aa).

Topologically, residues 1-11 are cytoplasmic; sequence MQLAKPLKYAA. Residues 12-32 traverse the membrane as a helical segment; that stretch reads ISGIVAFVGLMFGWVIFPAIL. Residues 33–458 are Extracellular-facing; that stretch reads KSQLKKEMAL…SQLFIPKRVV (426 aa). N-linked (GlcNAc...) asparagine glycosylation is found at Asn67, Asn105, and Asn229. 3 disulfide bridges follow: Cys268–Cys333, Cys297–Cys352, and Cys335–Cys341. Residue Asn440 is glycosylated (N-linked (GlcNAc...) asparagine). A helical transmembrane segment spans residues 459-479; sequence SVVCWCMISFGSLGVIAAVIF. The Cytoplasmic portion of the chain corresponds to 480-522; it reads HFKGDIMHLAVAGDNSVSKIKPENDENKEVGVMGQNQEPAKVM. The interval 500-522 is disordered; that stretch reads KPENDENKEVGVMGQNQEPAKVM. A compositionally biased stretch (polar residues) spans 513 to 522; it reads GQNQEPAKVM.

The protein belongs to the CD36 family. As to expression, principal component of the olfactory cilia membrane. Detected in both male and female antennae but not present in leg, abdomen, thorax or head.

The protein localises to the cell membrane. Its function is as follows. Plays an olfactory role that is not restricted to pheromone sensitivity. The sequence is that of Sensory neuron membrane protein 1 from Bombyx mori (Silk moth).